The following is a 504-amino-acid chain: Activin receptor type-1-like (504 aa).

Residues methionine 1–threonine 20 form the signal peptide. The Extracellular portion of the chain corresponds to lysine 21–proline 121. Asparagine 34 is a glycosylation site (N-linked (GlcNAc...) asparagine). 3 cysteine pairs are disulfide-bonded: cysteine 35–cysteine 52, cysteine 37–cysteine 42, and cysteine 47–cysteine 70. The mediates specificity for BMP ligand stretch occupies residues asparagine 74–leucine 77. 2 disulfide bridges follow: cysteine 78–cysteine 90 and cysteine 91–cysteine 96. Asparagine 99 carries N-linked (GlcNAc...) asparagine glycosylation. A helical membrane pass occupies residues leucine 122–tryptophan 142. Topologically, residues arginine 143 to histidine 504 are cytoplasmic. Phosphoserine is present on residues serine 156, serine 161, and serine 162. A GS domain is found at serine 173–glutamine 202. Positions valine 203–histidine 504 constitute a Protein kinase domain. ATP contacts are provided by residues valine 209 to valine 217 and lysine 230. The Proton acceptor role is filled by aspartate 331.

It belongs to the protein kinase superfamily. TKL Ser/Thr protein kinase family. TGFB receptor subfamily. In terms of assembly, interacts with TSC22D1/TSC-22. It depends on Mg(2+) as a cofactor. Mn(2+) serves as cofactor. In terms of tissue distribution, urogenital ridge, testis, ovary, brain and lung. In lung, found exclusively in pulmonary vessels of all sizes. Also expressed in aorta, vena cava and certain blood vessels of kidney, spleen, heart and intestine. For most blood vessels, a higher level of expression is found in endothelium than in adjacent smooth muscle.

The protein localises to the cell membrane. The catalysed reaction is L-threonyl-[receptor-protein] + ATP = O-phospho-L-threonyl-[receptor-protein] + ADP + H(+). It carries out the reaction L-seryl-[receptor-protein] + ATP = O-phospho-L-seryl-[receptor-protein] + ADP + H(+). Functionally, type I receptor for TGF-beta family ligands BMP9/GDF2 and BMP10 and important regulator of normal blood vessel development. On ligand binding, forms a receptor complex consisting of two type II and two type I transmembrane serine/threonine kinases. Type II receptors phosphorylate and activate type I receptors which autophosphorylate, then bind and activate SMAD transcriptional regulators. May bind activin as well. This chain is Activin receptor type-1-like (Acvrl1), found in Rattus norvegicus (Rat).